Consider the following 142-residue polypeptide: Transcriptional regulator MraZ (142 aa).

2 consecutive SpoVT-AbrB domains span residues 5–51 (ASAL…PRPE) and 77–120 (AMDV…DAQT).

This sequence belongs to the MraZ family. Forms oligomers.

It is found in the cytoplasm. The protein localises to the nucleoid. This Paraburkholderia phytofirmans (strain DSM 17436 / LMG 22146 / PsJN) (Burkholderia phytofirmans) protein is Transcriptional regulator MraZ.